A 304-amino-acid polypeptide reads, in one-letter code: N-acetylmuramic acid 6-phosphate etherase (304 aa).

Ser2 carries the phosphoserine modification. The SIS domain occupies 59–222 (AYESFQNGGR…STAVMVKIGK (164 aa)). The active-site Proton donor is Glu87. Glu118 is an active-site residue.

It belongs to the GCKR-like family. MurNAc-6-P etherase subfamily. Homodimer.

It catalyses the reaction N-acetyl-D-muramate 6-phosphate + H2O = N-acetyl-D-glucosamine 6-phosphate + (R)-lactate. It functions in the pathway amino-sugar metabolism; N-acetylmuramate degradation. Functionally, specifically catalyzes the cleavage of the D-lactyl ether substituent of MurNAc 6-phosphate, producing GlcNAc 6-phosphate and D-lactate. The chain is N-acetylmuramic acid 6-phosphate etherase from Bacillus subtilis (strain 168).